The chain runs to 102 residues: Flagellar hook-basal body complex protein FliE 1 (102 aa).

This sequence belongs to the FliE family.

It localises to the bacterial flagellum basal body. In Bradyrhizobium diazoefficiens (strain JCM 10833 / BCRC 13528 / IAM 13628 / NBRC 14792 / USDA 110), this protein is Flagellar hook-basal body complex protein FliE 1 (fliE1).